The primary structure comprises 1410 residues: Ribosome-binding protein 1 (1410 aa).

Over 1–7 the chain is Lumenal; it reads MDIYDTQ. Residues 8 to 28 traverse the membrane as a helical segment; it reads TLGVVVFGGFMVVSAIGIFLV. The Cytoplasmic portion of the chain corresponds to 29–1410; it reads STFSMKETSY…GSSSKEGTSV (1382 aa). Disordered regions lie at residues 44 to 90 and 129 to 152; these read NQRK…DPAP and QEKL…VEPA. Positions 52 to 63 are enriched in basic residues; the sequence is THHQKVEKKKKE. Residues 64 to 88 are compositionally biased toward basic and acidic residues; that stretch reads KTVEKKGKTKKKEEKPNGKIPDHDP. A Glycyl lysine isopeptide (Lys-Gly) (interchain with G-Cter in SUMO2) cross-link involves residue lysine 148. Phosphoserine occurs at positions 159 and 165. Disordered stretches follow at residues 173 to 648 and 895 to 925; these read APKE…PLYL and QSSH…LQSS. 2 stretches are compositionally biased toward polar residues: residues 191–209 and 225–238; these read TPAT…QNQS and TPNQ…TPNQ. Repeat copies occupy residues 197-206, 207-216, 217-226, 227-236, 237-246, 247-256, 257-266, 267-276, 277-286, 287-296, 297-306, 307-316, 317-326, 327-336, 337-346, 347-356, 357-366, 367-376, 377-386, 387-396, 397-406, 407-416, 417-426, 427-436, 437-446, 447-456, 457-466, 467-476, 477-486, 487-496, 497-506, 507-516, and 517-526. Positions 197–604 are 41 X 10 AA approximate tandem repeats of [TN]-Q-[GSA]-[KRQT]-K-[ATGSV]-[ED]-[GTAS]-[ATIS]-[PQTAS]; it reads TQGKKAEGTQ…NQGKKTESAS (408 aa). Threonine 225, threonine 235, threonine 245, and threonine 255 each carry phosphothreonine. Composition is skewed to polar residues over residues 265-278 and 295-519; these read AQNQ…TPNQ and AQNQ…QNQG. Residues 520-532 are compositionally biased toward basic and acidic residues; the sequence is KKTEGAQGKKAER. The stretch at 527-534 is one 34; approximate repeat; the sequence is GKKAERSP. Serine 533 carries the post-translational modification Phosphoserine. The stretch at 535 to 544 is repeat 35; it reads NQGKKGEGAP. Residues 545 to 554 form a 36; approximate repeat; the sequence is IQGKKADSVA. Over residues 553-567 the composition is skewed to polar residues; sequence VANQGTKVEGITNQG. Repeat copies occupy residues 555–564 and 565–574. The span at 568–581 shows a compositional bias: basic and acidic residues; sequence KKAEGSPSEGKKAE. Serine 573 and serine 583 each carry phosphoserine. The 39; approximate repeat unit spans residues 575-584; sequence SEGKKAEGSP. 2 repeat units span residues 585–594 and 595–604. Over residues 602 to 612 the composition is skewed to polar residues; it reads SASVQGRNTDV. Serine 615 carries the phosphoserine modification. Lysine 620 is covalently cross-linked (Glycyl lysine isopeptide (Lys-Gly) (interchain with G-Cter in SUMO1)). Serine 900 bears the Phosphoserine mark. Lysine 932 is modified (N6-acetyllysine). A phosphoserine mark is found at serine 959 and serine 978. 4 disordered regions span residues 1093–1122, 1260–1287, 1330–1362, and 1378–1410; these read GPTL…ETQS, EMKS…EQDP, EKLR…LTSD, and QEQL…GTSV. Serine 1276 and serine 1277 each carry phosphoserine. 2 stretches are compositionally biased toward basic and acidic residues: residues 1347-1360 and 1381-1403; these read SQLK…KKLT and LARE…DGSS.

Its subcellular location is the endoplasmic reticulum membrane. Its function is as follows. Acts as a ribosome receptor and mediates interaction between the ribosome and the endoplasmic reticulum membrane. This Homo sapiens (Human) protein is Ribosome-binding protein 1 (RRBP1).